The primary structure comprises 376 residues: N-acetyldiaminopimelate deacetylase (376 aa).

The active site involves Asp-69. Residue Glu-128 is the Proton acceptor of the active site.

This sequence belongs to the peptidase M20A family. N-acetyldiaminopimelate deacetylase subfamily.

The enzyme catalyses N-acetyl-(2S,6S)-2,6-diaminopimelate + H2O = (2S,6S)-2,6-diaminopimelate + acetate. Its pathway is amino-acid biosynthesis; L-lysine biosynthesis via DAP pathway; LL-2,6-diaminopimelate from (S)-tetrahydrodipicolinate (acetylase route): step 3/3. In terms of biological role, catalyzes the conversion of N-acetyl-diaminopimelate to diaminopimelate and acetate. In Streptococcus pneumoniae serotype 4 (strain ATCC BAA-334 / TIGR4), this protein is N-acetyldiaminopimelate deacetylase.